A 339-amino-acid polypeptide reads, in one-letter code: Spore coat polysaccharide biosynthesis protein SpsG (339 aa).

Residues 241-261 (IVAGGISLYEAICIGVPCLVL) traverse the membrane as a helical segment.

The protein to M.jannaschii MJ1062.

The protein localises to the cell membrane. Its pathway is spore coat biogenesis; spore coat polysaccharide biosynthesis. The polypeptide is Spore coat polysaccharide biosynthesis protein SpsG (spsG) (Bacillus subtilis (strain 168)).